The following is a 100-amino-acid chain: Urease subunit gamma (100 aa).

This sequence belongs to the urease gamma subunit family. In terms of assembly, heterotrimer of UreA (gamma), UreB (beta) and UreC (alpha) subunits. Three heterotrimers associate to form the active enzyme.

It localises to the cytoplasm. It catalyses the reaction urea + 2 H2O + H(+) = hydrogencarbonate + 2 NH4(+). The protein operates within nitrogen metabolism; urea degradation; CO(2) and NH(3) from urea (urease route): step 1/1. The polypeptide is Urease subunit gamma (Rhizobium rhizogenes (strain K84 / ATCC BAA-868) (Agrobacterium radiobacter)).